The chain runs to 358 residues: C-X-C chemokine receptor type 4 (358 aa).

Residues 1-25 (MDGFSGGIDINIFDSNSTENGSGDF) form an important for chemokine binding and signaling region. The Extracellular portion of the chain corresponds to 1–44 (MDGFSGGIDINIFDSNSTENGSGDFEDFSEPCFMHDNSDFNRIF). Residues Asn16 and Asn20 are each glycosylated (N-linked (GlcNAc...) asparagine). 2 disulfides stabilise this stretch: Cys32–Cys281 and Cys113–Cys190. The helical transmembrane segment at 45–67 (LPTIYSFIFLLGIIGNGLVVVVM) threads the bilayer. Residues 68–81 (GYQKKSRTMTDKYR) are Cytoplasmic-facing. The helical transmembrane segment at 82–103 (LHLSVADLLFVFTLPFWSVDAA) threads the bilayer. Residues 98-101 (WSVD) are chemokine binding. The Extracellular segment spans residues 104-114 (IGWYFKEFLCK). Residues 115–134 (AVHVIYTVNLYSSVLILAFI) form a helical membrane-spanning segment. Residues 117-121 (HVIYT) are chemokine binding. Topologically, residues 135-158 (SLDRYLAIVHATNSQGSRKMLADK) are cytoplasmic. Positions 139–151 (YLAIVHATNSQGS) are involved in dimerization; when bound to chemokine. A helical membrane pass occupies residues 159–178 (VVYAGVWLPALLLTVPDLVF). At 179–202 (ARVSDENGQFVCDRIYPIDNRETW) the chain is on the extracellular side. The tract at residues 190–194 (CDRIY) is chemokine binding, important for signaling. A helical transmembrane segment spans residues 203 to 223 (TVGFRFLHITVGLILPGLIIL). Topologically, residues 224-248 (ICYCVIISKLSHSKGHQKRKALKTT) are cytoplasmic. A helical membrane pass occupies residues 249–268 (VILILAFFACWLPYYVCLTT). The Extracellular portion of the chain corresponds to 269–289 (DTFMLLGLLKADCIWENTLHK). A helical transmembrane segment spans residues 290–309 (AISITEALAFFHCCLNPILY). The Cytoplasmic segment spans residues 310-358 (AFLGAKFKTSAQNAFTSVSRGSSLKILSKKRAGLSSVSTESESSSFHSS). The interval 338-358 (KKRAGLSSVSTESESSSFHSS) is disordered. Residues 344–358 (SSVSTESESSSFHSS) show a composition bias toward low complexity.

This sequence belongs to the G-protein coupled receptor 1 family. Monomer. Can form dimers. Post-translationally, sulfation is required for efficient binding of cxcl12/sdf-1alpha and promotes its dimerization. O- and N-glycosylated.

It is found in the cell membrane. The protein localises to the cytoplasm. It localises to the nucleus. The protein resides in the early endosome. Its subcellular location is the late endosome. It is found in the lysosome. Receptor for the C-X-C chemokine cxcl12/sdf-1. Transduces a signal by increasing the intracellular calcium ion level. Signaling with cxcl12/sdf-1 mediates the directional movement of mesodermal cells during gastrulation. May play a role in the migration of embryonic presumptive primordial germ cells (pPGCs). May also be involved in regulating migration of hematopoietic stem cells into the larval liver. This is C-X-C chemokine receptor type 4 from Xenopus tropicalis (Western clawed frog).